Reading from the N-terminus, the 160-residue chain is MKLEVLPLDQKTFSAYGDVIETQERDFFHINNGLVERYHDLAKVEVLEQDRTLISINRAQPAAMPIVVHELERHPLGTQAFVPMNGEAFVVIVALGDDKPDLSTLRAFISNGRQGVNYHRNVWHHPLFAWQTVTDFLTVDRGGSDNCDVESIPTHELCFA.

The protein belongs to the ureidoglycolate lyase family. Homodimer. The cofactor is Ni(2+).

It carries out the reaction (S)-ureidoglycolate = urea + glyoxylate. It participates in nitrogen metabolism; (S)-allantoin degradation. Catalyzes the catabolism of the allantoin degradation intermediate (S)-ureidoglycolate, generating urea and glyoxylate. Involved in the utilization of allantoin as nitrogen source. This is Ureidoglycolate lyase from Salmonella agona (strain SL483).